We begin with the raw amino-acid sequence, 131 residues long: MRHRHGLRKLNRTSSHRLAMLRNMSNSLFQHELIKTTLPKAKELRKVVEPLITLAKKDTVANRRLAFARLRDRDMVTKLFTELGPRYNARPGGYTRILKFGFRQGDNAPMALVELVDRPEITEAPAEEAAE.

This sequence belongs to the bacterial ribosomal protein bL17 family. In terms of assembly, part of the 50S ribosomal subunit. Contacts protein L32.

This is Large ribosomal subunit protein bL17 from Cupriavidus pinatubonensis (strain JMP 134 / LMG 1197) (Cupriavidus necator (strain JMP 134)).